A 479-amino-acid polypeptide reads, in one-letter code: Ribulose bisphosphate carboxylase large chain (479 aa).

The propeptide occupies 1–2; sequence MS. 2 residues coordinate substrate: Asn123 and Thr173. The Proton acceptor role is filled by Lys175. Residue Lys177 coordinates substrate. The Mg(2+) site is built by Lys201, Asp203, and Glu204. At Lys201 the chain carries N6-carboxylysine. Ser208 carries the phosphoserine modification. The Proton acceptor role is filled by His294. Arg295 and His327 together coordinate substrate. Phosphothreonine is present on Thr330. Ser379 is a binding site for substrate.

This sequence belongs to the RuBisCO large chain family. Type I subfamily. As to quaternary structure, heterohexadecamer of 8 large chains and 8 small chains; disulfide-linked. The disulfide link is formed within the large subunit homodimers. It depends on Mg(2+) as a cofactor. Post-translationally, the disulfide bond which can form in the large chain dimeric partners within the hexadecamer appears to be associated with oxidative stress and protein turnover.

Its subcellular location is the plastid. The protein resides in the chloroplast. It carries out the reaction 2 (2R)-3-phosphoglycerate + 2 H(+) = D-ribulose 1,5-bisphosphate + CO2 + H2O. The enzyme catalyses D-ribulose 1,5-bisphosphate + O2 = 2-phosphoglycolate + (2R)-3-phosphoglycerate + 2 H(+). RuBisCO catalyzes two reactions: the carboxylation of D-ribulose 1,5-bisphosphate, the primary event in carbon dioxide fixation, as well as the oxidative fragmentation of the pentose substrate in the photorespiration process. Both reactions occur simultaneously and in competition at the same active site. This is Ribulose bisphosphate carboxylase large chain from Draba nemorosa (Woodland whitlowgrass).